Reading from the N-terminus, the 219-residue chain is Lipid transferase CIDEA (219 aa).

In terms of domain architecture, CIDE-N spans 33 to 110 (PARPFRVSNH…ILEKGQKWMP (78 aa)). Residues 163–180 (CTGLKGLLRSLLRFLSYS) form an amphipathic helix region.

This sequence belongs to the CIDE family. Homodimer. Interacts with CIDEC. Directly interacts with CEBPB. Interacts with isoform CLSTN3beta of CLSTN3; inhibiting the lipid transferase activity of CIDEA. Expressed in omental and subcutaneous adipose tissue (at protein level).

It is found in the lipid droplet. It localises to the nucleus. It catalyses the reaction a triacyl-sn-glycerol(in) = a triacyl-sn-glycerol(out). In terms of biological role, lipid transferase that promotes unilocular lipid droplet formation by mediating lipid droplet fusion. Lipid droplet fusion promotes their enlargement, restricting lipolysis and favoring lipid storage. Localizes on the lipid droplet surface, at focal contact sites between lipid droplets, and mediates atypical lipid droplet fusion by promoting directional net neutral lipid transfer from the smaller to larger lipid droplets. The transfer direction may be driven by the internal pressure difference between the contacting lipid droplet pair and occurs at a lower rate than that promoted by CIDEC. May also act as a CEBPB coactivator in epithelial cells to control the expression of a subset of CEBPB downstream target genes, including ID2, IGF1, PRLR, SOCS1, SOCS3, XDH, but not casein. By interacting with CEBPB, strengthens the association of CEBPB with the XDH promoter, increases histone acetylation and dissociates HDAC1 from the promoter. When overexpressed, induces apoptosis; the physiological significance of its role in apoptosis is unclear. This Homo sapiens (Human) protein is Lipid transferase CIDEA.